A 164-amino-acid chain; its full sequence is MKSVITTTISAADAAGRYPSTSDLQSVQGNIQRAAARLEAAEKLGSNHEAVVKEAGDACFSKYGYLKNPGEAGENQEKINKCYRDIDHYMRLINYTLVVGGTGPLDEWGIAGAREVYRTLNLPSAAYIAAFVFTRDRLCIPRDMSAQAGVEFCTALDYLINSLS.

Residues Cys-82 and Cys-139 each coordinate (2R,3E)-phycoerythrobilin.

This sequence belongs to the phycobiliprotein family. As to quaternary structure, heterodimer of an alpha and a beta chain. Contains two covalently linked bilin chromophores.

It is found in the plastid. Its subcellular location is the chloroplast thylakoid membrane. Light-harvesting photosynthetic bile pigment-protein from the phycobiliprotein complex. The sequence is that of R-phycoerythrin alpha chain (cpeA) from Lophosiphonia boldii (Red alga).